A 179-amino-acid polypeptide reads, in one-letter code: Large ribosomal subunit protein uL10 (179 aa).

It belongs to the universal ribosomal protein uL10 family. As to quaternary structure, part of the ribosomal stalk of the 50S ribosomal subunit. The N-terminus interacts with L11 and the large rRNA to form the base of the stalk. The C-terminus forms an elongated spine to which L12 dimers bind in a sequential fashion forming a multimeric L10(L12)X complex.

In terms of biological role, forms part of the ribosomal stalk, playing a central role in the interaction of the ribosome with GTP-bound translation factors. This chain is Large ribosomal subunit protein uL10, found in Kosmotoga olearia (strain ATCC BAA-1733 / DSM 21960 / TBF 19.5.1).